The sequence spans 529 residues: Tyrosinase (529 aa).

A signal peptide spans 1–18 (MLLAVLYCLLWSFQTSAG). The Lumenal, melanosome segment spans residues 19-476 (HFPRACVSSK…YLEQASRIWS (458 aa)). N-linked (GlcNAc...) asparagine glycans are attached at residues N86, N111, and N161. The Cu cation site is built by H180, H202, and H211. An N-linked (GlcNAc...) asparagine glycan is attached at N230. The interval 287-313 (SLCNGTPEGPLQRNPGNHDKSRTPRLP) is disordered. N337 is a glycosylation site (N-linked (GlcNAc...) asparagine). H363 and H367 together coordinate Cu cation. Residue N371 is glycosylated (N-linked (GlcNAc...) asparagine). Cu cation is bound at residue H390. The chain crosses the membrane as a helical span at residues 477–497 (WLLGAAMVGAVLTALLAGLVS). The Cytoplasmic portion of the chain corresponds to 498 to 529 (LLCRHKRKQLPEEKQPLLMEKEDYHSLYQSHL).

It belongs to the tyrosinase family. As to quaternary structure, forms an OPN3-dependent complex with DCT in response to blue light in melanocytes. Cu(2+) is required as a cofactor. Post-translationally, glycosylated.

The protein resides in the melanosome membrane. The protein localises to the melanosome. It catalyses the reaction 2 L-dopa + O2 = 2 L-dopaquinone + 2 H2O. It carries out the reaction L-tyrosine + O2 = L-dopaquinone + H2O. The catalysed reaction is 2 5,6-dihydroxyindole-2-carboxylate + O2 = 2 indole-5,6-quinone-2-carboxylate + 2 H2O. Its function is as follows. This is a copper-containing oxidase that functions in the formation of pigments such as melanins and other polyphenolic compounds. Catalyzes the initial and rate limiting step in the cascade of reactions leading to melanin production from tyrosine. In addition to hydroxylating tyrosine to DOPA (3,4-dihydroxyphenylalanine), also catalyzes the oxidation of DOPA to DOPA-quinone, and possibly the oxidation of DHI (5,6-dihydroxyindole) to indole-5,6 quinone. The chain is Tyrosinase (TYR) from Gorilla gorilla gorilla (Western lowland gorilla).